We begin with the raw amino-acid sequence, 136 residues long: MRASMVRRMAAAASSSASSSLRPAPLALLPPIPLYRRLLRAHRKHLPAEMRLLGDEYLKSEFRAHRNIDNPAHLIGFLTEWQLYAQQVEGESWLGEKIDQAKVEKLSEQQVGQLYELMMAIKSRREGGEGEGQESP.

Residues 1 to 24 (MRASMVRRMAAAASSSASSSLRPA) constitute a mitochondrion transit peptide.

This sequence belongs to the complex I LYR family. SDHAF3 subfamily. Interacts with the iron-sulfur protein subunit within the SDH catalytic dimer.

Its subcellular location is the mitochondrion matrix. Functionally, plays an essential role in the assembly of succinate dehydrogenase (SDH), an enzyme complex (also referred to as respiratory complex II) that is a component of both the tricarboxylic acid (TCA) cycle and the mitochondrial electron transport chain, and which couples the oxidation of succinate to fumarate with the reduction of ubiquinone (coenzyme Q) to ubiquinol. Promotes maturation of the iron-sulfur protein subunit of the SDH catalytic dimer, protecting it from the deleterious effects of oxidants. May act together with SDHAF1. This is Succinate dehydrogenase assembly factor 3, mitochondrial from Pyricularia oryzae (strain 70-15 / ATCC MYA-4617 / FGSC 8958) (Rice blast fungus).